Consider the following 507-residue polypeptide: Pyridoxine 4-oxidase (507 aa).

H448 functions as the Proton acceptor in the catalytic mechanism.

It belongs to the GMC oxidoreductase family. Monomer. The cofactor is FAD.

It catalyses the reaction pyridoxine + O2 = pyridoxal + H2O2. Its pathway is cofactor degradation; B6 vitamer degradation; pyridoxal from pyridoxine (oxidase route): step 1/1. This is Pyridoxine 4-oxidase (pno) from Microbacterium luteolum (Aureobacterium luteolum).